A 326-amino-acid polypeptide reads, in one-letter code: Metallophosphoesterase domain-containing protein 1 (326 aa).

Belongs to the UPF0046 family.

Its function is as follows. May have metallophosphoesterase activity (in vitro). This Mus musculus (Mouse) protein is Metallophosphoesterase domain-containing protein 1 (Mpped1).